A 329-amino-acid polypeptide reads, in one-letter code: Putative GTPase Obg (329 aa).

Residues 1 to 159 (MQFIDQARIM…WPLQLELKLL (159 aa)) enclose the Obg domain. The OBG-type G domain occupies 160–328 (AEVGIIGLPN…LKTQIWQQLG (169 aa)). Residues 166-173 (GLPNAGKS), 191-195 (FTTLI), 213-216 (DIPG), 280-283 (SKIE), and 309-311 (SSA) contribute to the GTP site. Mg(2+) is bound by residues S173 and T193.

This sequence belongs to the TRAFAC class OBG-HflX-like GTPase superfamily. OBG GTPase family. In terms of assembly, monomer. Mg(2+) is required as a cofactor.

Its subcellular location is the plastid. It localises to the organellar chromatophore. Functionally, an essential GTPase which binds GTP, GDP and possibly (p)ppGpp with moderate affinity, with high nucleotide exchange rates and a fairly low GTP hydrolysis rate. This is Putative GTPase Obg from Paulinella chromatophora.